The following is a 573-amino-acid chain: Solute carrier family 41 member 2 (573 aa).

Topologically, residues 1–162 (MTHSKGRPVT…KESSGVMALQ (162 aa)) are extracellular. Phosphoserine occurs at positions 137 and 138. The helical transmembrane segment at 163-183 (ILVPFLLAGFGTVSAGMVLDI) threads the bilayer. Residues 184 to 195 (VQHWEVFKNVTE) are Cytoplasmic-facing. The chain crosses the membrane as a helical span at residues 196–216 (VFILVPALLGLKGNLEMTLAS). At 217-245 (RLSTAVNVGKMDSPIEKWNLIIGNLALKQ) the chain is on the extracellular side. Residues 246–266 (VQATVVGFLAAVAAIILGWIP) form a helical membrane-spanning segment. Over 267–282 (EGKYYLSHSILLCSSS) the chain is Cytoplasmic. Residues 283 to 303 (VATAFIASLLQGIIMVGVIVG) form a helical membrane-spanning segment. Over 304-313 (SKKTGINPDN) the chain is Extracellular. The helical transmembrane segment at 314–334 (VATPIAASFGDLITLAILAWI) threads the bilayer. Topologically, residues 335-347 (SQGLYSCLETYYY) are cytoplasmic. A helical membrane pass occupies residues 348–368 (ISPLVCAFFLALTPIWIIIAA). Over 369 to 376 (KHPATRTV) the chain is Extracellular. Residues 377–397 (LHSGWEPVITAMVISSIGGLI) form a helical membrane-spanning segment. Residues 398–406 (LDTTVSDPN) lie on the Cytoplasmic side of the membrane. Residues 407-427 (LVGIVVYTPVINGIGGNLVAI) traverse the membrane as a helical segment. The Extracellular segment spans residues 428–469 (QASRISTYLHLHSIPGELPEEPKGCSYPFRTFFGSGVNNKSA). Residues 470-490 (QVLLLFVIPGHLIFLYTIHLM) traverse the membrane as a helical segment. At 491-498 (KSGHTSLT) the chain is on the cytoplasmic side. The helical transmembrane segment at 499 to 519 (VVFVVVYLFAAVLQVFTLLWI) threads the bilayer. Over 520-543 (ADWMVHRFWRKGKDPDSFSIPYLT) the chain is Extracellular. The helical transmembrane segment at 544 to 564 (ALGDLLGTALLALSFHFLWLI) threads the bilayer. The Cytoplasmic segment spans residues 565–573 (GDRDGDVGD).

This sequence belongs to the SLC41A transporter family.

The protein localises to the cell membrane. The catalysed reaction is Mg(2+)(in) = Mg(2+)(out). The enzyme catalyses Mn(2+)(in) = Mn(2+)(out). It carries out the reaction Co(2+)(in) = Co(2+)(out). It catalyses the reaction Ni(2+)(in) = Ni(2+)(out). The catalysed reaction is Fe(2+)(in) = Fe(2+)(out). In terms of biological role, acts as a plasma-membrane magnesium transporter. Can also mediate the transport of other divalent metal cations in an order of Ba(2+) &gt; Ni(2+) &gt; Co(2+) &gt; Fe(2+) &gt; Mn(2+). This Mus musculus (Mouse) protein is Solute carrier family 41 member 2 (Slc41a2).